We begin with the raw amino-acid sequence, 119 residues long: Beta-2-microglobulin (119 aa).

The first 20 residues, 1-20 (MARTVATFFLMLVSLACLDA), serve as a signal peptide directing secretion. In terms of domain architecture, Ig-like C1-type spans 25–114 (PQVQVYTRHP…VTLKEPKVVT (90 aa)). An intrachain disulfide couples Cys45 to Cys100.

The protein belongs to the beta-2-microglobulin family. Heterodimer of an alpha chain and a beta chain. Beta-2-microglobulin is the beta-chain of major histocompatibility complex class I molecules.

Its subcellular location is the secreted. Functionally, component of the class I major histocompatibility complex (MHC). Involved in the presentation of peptide antigens to the immune system. This chain is Beta-2-microglobulin (B2M), found in Sigmodon hispidus (Hispid cotton rat).